Here is a 305-residue protein sequence, read N- to C-terminus: NAD kinase 2 (305 aa).

Catalysis depends on D78, which acts as the Proton acceptor. NAD(+)-binding positions include 78-79 (DG), 152-153 (NE), D182, 193-198 (TAYSLS), and N251.

This sequence belongs to the NAD kinase family. Requires a divalent metal cation as cofactor.

It is found in the cytoplasm. The enzyme catalyses NAD(+) + ATP = ADP + NADP(+) + H(+). Functionally, involved in the regulation of the intracellular balance of NAD and NADP, and is a key enzyme in the biosynthesis of NADP. Catalyzes specifically the phosphorylation on 2'-hydroxyl of the adenosine moiety of NAD to yield NADP. Functions as a growth repressor under light-activated heterotrophic growth conditions and light and dark cycle conditions in the presence of glucose. NADP(H)/NAD(H) maintenance by slr0400 probably plays a significant role in modulating glycolysis and the TCA cycle to repress the growth rate and maintain the photosynthetic capacity. In Synechocystis sp. (strain ATCC 27184 / PCC 6803 / Kazusa), this protein is NAD kinase 2.